Here is a 594-residue protein sequence, read N- to C-terminus: Lysine--tRNA ligase cla4 (594 aa).

The tract at residues 1–62 (MADPGAVKET…KETSSEQDEA (62 aa)) is disordered. Residues 18-42 (TGEKVSKTELKKRLKSRAKEAEKQK) show a composition bias toward basic and acidic residues.

The protein belongs to the class-II aminoacyl-tRNA synthetase family. In terms of assembly, homodimer.

The catalysed reaction is tRNA(Lys) + L-lysine + ATP = L-lysyl-tRNA(Lys) + AMP + diphosphate. In terms of biological role, involved in self-resistance to cladosporin since this product is an inhibitor of lysyl-tRNA synthetase. Cla4 may not be inhibited by cladosporin, thereby imparting cladosporin resistance. When cladosporin biosynthesis is switched on, transcription of cla4 will then be necessary for continued protein synthesis in C.cladosporioides. This Cladosporium cladosporioides protein is Lysine--tRNA ligase cla4.